Consider the following 289-residue polypeptide: Diaminopimelate epimerase (289 aa).

Residues Asn11 and Asn78 each coordinate substrate. The active-site Proton donor is Cys87. Substrate is bound by residues 88 to 89 (GN), Asn163, Asn199, and 217 to 218 (ER). The active-site Proton acceptor is Cys226. Residue 227-228 (GT) coordinates substrate.

This sequence belongs to the diaminopimelate epimerase family. Homodimer.

The protein resides in the cytoplasm. It catalyses the reaction (2S,6S)-2,6-diaminopimelate = meso-2,6-diaminopimelate. Its pathway is amino-acid biosynthesis; L-lysine biosynthesis via DAP pathway; DL-2,6-diaminopimelate from LL-2,6-diaminopimelate: step 1/1. Catalyzes the stereoinversion of LL-2,6-diaminopimelate (L,L-DAP) to meso-diaminopimelate (meso-DAP), a precursor of L-lysine and an essential component of the bacterial peptidoglycan. The sequence is that of Diaminopimelate epimerase from Mycolicibacterium gilvum (strain PYR-GCK) (Mycobacterium gilvum (strain PYR-GCK)).